Consider the following 390-residue polypeptide: Sulfate adenylyltransferase (390 aa).

It belongs to the sulfate adenylyltransferase family.

It carries out the reaction sulfate + ATP + H(+) = adenosine 5'-phosphosulfate + diphosphate. It participates in sulfur metabolism; hydrogen sulfide biosynthesis; sulfite from sulfate: step 1/3. The sequence is that of Sulfate adenylyltransferase (sat) from Synechocystis sp. (strain ATCC 27184 / PCC 6803 / Kazusa).